A 1152-amino-acid polypeptide reads, in one-letter code: Alpha-mannosidase 2x (1152 aa).

The Cytoplasmic segment spans residues 1–5 (MKLKK). A helical; Signal-anchor for type II membrane protein transmembrane segment spans residues 6-26 (QVTVCGAAIFCVAVFSLYLML). The Lumenal segment spans residues 27–796 (DRVQHDPARH…VDEEQEQQME (770 aa)). The stretch at 43–74 (PRSQISVLQNRIEQLEQLLEENHDIISRIKDS) forms a coiled coil. Zn(2+) is bound by residues His175 and Asp177. Asn225 carries N-linked (GlcNAc...) asparagine glycosylation. Residue Asp289 participates in Zn(2+) binding. The active-site Nucleophile is the Asp289. N-linked (GlcNAc...) asparagine glycosylation occurs at Asn305. Zn(2+) is bound at residue His569.

Belongs to the glycosyl hydrolase 38 family. Homodimer; disulfide-linked. Interacts with MGAT4D. Requires Zn(2+) as cofactor.

It is found in the golgi apparatus membrane. It catalyses the reaction N(4)-{beta-D-GlcNAc-(1-&gt;2)-alpha-D-Man-(1-&gt;3)-[alpha-D-Man-(1-&gt;3)-[alpha-D-Man-(1-&gt;6)]-alpha-D-Man-(1-&gt;6)]-beta-D-Man-(1-&gt;4)-beta-D-GlcNAc-(1-&gt;4)-beta-D-GlcNAc}-L-asparaginyl-[protein] + 2 H2O = 2 alpha-D-mannopyranose + an N(4)-{beta-D-GlcNAc-(1-&gt;2)-alpha-D-Man-(1-&gt;3)-[alpha-D-Man-(1-&gt;6)]-beta-D-Man-(1-&gt;4)-beta-D-GlcNAc-(1-&gt;4)-beta-D-GlcNAc}-L-asparaginyl-[protein]. The protein operates within protein modification; protein glycosylation. Its function is as follows. Catalyzes the first committed step in the biosynthesis of complex N-glycans. It controls conversion of high mannose to complex N-glycans; the final hydrolytic step in the N-glycan maturation pathway. The protein is Alpha-mannosidase 2x (Man2a2) of Mus musculus (Mouse).